A 1607-amino-acid chain; its full sequence is Phosphatidylinositol 3-kinase piki-1 (1607 aa).

The 20-residue stretch at 2 to 21 (SDDEELQLAIEISKKTFKDE) folds into the UIM domain. Disordered regions lie at residues 54–91 (EANSPGPSSYSGSLATSPIDFRPVYNEPRAGPIPHSQS), 105–128 (STSQPPAFPPPPRPPKPEQYKFPP), and 142–182 (PPPP…SFAS). Over residues 58–69 (PGPSSYSGSLAT) the composition is skewed to polar residues. The segment covering 158–169 (PPVPIHPTPPVS) has biased composition (pro residues). Residues 362–453 (ASTVKVVVYK…GDDVKLDLGV (92 aa)) form the PI3K-RBD domain. A C2 PI3K-type domain is found at 598-766 (KMDFLQIMLN…KIWDTEIYFP (169 aa)). The PIK helical domain occupies 776 to 953 (PQDFATLDIE…AIRCQNLQQK (178 aa)). Positions 1029–1303 (RIEECSVFNS…MIQNSLGSAF (275 aa)) constitute a PI3K/PI4K catalytic domain. The interval 1035 to 1041 (VFNSNAK) is G-loop. Residues 1168-1176 (GIGDRHNDN) are catalytic loop. An activation loop region spans residues 1187–1213 (HIDFGKYMGDWQMAAGFRRDRVPFVFT). One can recognise a PX domain in the interval 1344–1458 (GRISRVTVLK…TFFHSILRDN (115 aa)). Positions 1472-1601 (SQCQIYLKIE…KNCRTLEGWF (130 aa)) constitute a C2 domain.

It belongs to the PI3/PI4-kinase family.

The protein resides in the cell projection. The protein localises to the phagocytic cup. It localises to the cytoplasmic vesicle. Its subcellular location is the phagosome membrane. It is found in the cytoplasm. It carries out the reaction a 1,2-diacyl-sn-glycero-3-phospho-(1D-myo-inositol) + ATP = a 1,2-diacyl-sn-glycero-3-phospho-(1D-myo-inositol-3-phosphate) + ADP + H(+). Its function is as follows. Phosphatidylinositol 3-kinase involved in clearance of apoptotic cell corpses by phagosomes. Phagosome maturation requires two sequential and non-overlapping pulses of phosphatidylinositol-3-phosphate (PI3P) on the vesicle surface which mediates recruitment of sortins snx-1 and lst-4 and small GTPases rab-5, rab-2 and rab-7. The first pulse is initiated by piki-1, then maintained by vps-34 which also produces the second pulse. Unlike vps-34, not involved in the formation of PI3P in early endosomes. This is Phosphatidylinositol 3-kinase piki-1 from Caenorhabditis elegans.